The following is a 147-amino-acid chain: Large ribosomal subunit protein uL15 (147 aa).

Over residues 1–11 the composition is skewed to basic and acidic residues; the sequence is MKLHDLRPAKD. The interval 1–57 is disordered; sequence MKLHDLRPAKDAKKKRKRVGRGTGSGRGFTSGRGSKGQNARSGGGVRPTFEGGQTPL. Residues 21–35 show a composition bias toward gly residues; that stretch reads RGTGSGRGFTSGRGS.

Belongs to the universal ribosomal protein uL15 family. Part of the 50S ribosomal subunit.

Its function is as follows. Binds to the 23S rRNA. This is Large ribosomal subunit protein uL15 from Halothermothrix orenii (strain H 168 / OCM 544 / DSM 9562).